The sequence spans 964 residues: Translation initiation factor IF-2 (964 aa).

The segment at alanine 26–proline 375 is disordered. 7 stretches are compositionally biased toward basic and acidic residues: residues tyrosine 49 to serine 60, valine 91 to lysine 103, alanine 118 to proline 154, isoleucine 174 to glutamine 206, proline 225 to glycine 236, arginine 243 to glycine 252, and lysine 328 to lysine 339. A tr-type G domain is found at proline 464 to lysine 633. The tract at residues glycine 473–threonine 480 is G1. GTP is bound at residue glycine 473–threonine 480. The interval glycine 498–histidine 502 is G2. The interval aspartate 519–glycine 522 is G3. GTP-binding positions include aspartate 519–histidine 523 and asparagine 573–aspartate 576. Positions asparagine 573 to aspartate 576 are G4. The interval serine 609–lysine 611 is G5.

The protein belongs to the TRAFAC class translation factor GTPase superfamily. Classic translation factor GTPase family. IF-2 subfamily.

It is found in the cytoplasm. In terms of biological role, one of the essential components for the initiation of protein synthesis. Protects formylmethionyl-tRNA from spontaneous hydrolysis and promotes its binding to the 30S ribosomal subunits. Also involved in the hydrolysis of GTP during the formation of the 70S ribosomal complex. The protein is Translation initiation factor IF-2 of Chromobacterium violaceum (strain ATCC 12472 / DSM 30191 / JCM 1249 / CCUG 213 / NBRC 12614 / NCIMB 9131 / NCTC 9757 / MK).